The sequence spans 530 residues: Probable basic-leucine zipper transcription factor L (530 aa).

Low complexity-rich tracts occupy residues Met-1–Ser-17 and Ser-24–Ser-39. The tract at residues Met-1 to Lys-76 is disordered. The bZIP domain maps to Val-55–Leu-118. The tract at residues Lys-56 to Lys-77 is basic motif. The leucine-zipper stretch occupies residues Leu-83–Ile-104. Disordered stretches follow at residues Asn-142–Val-177, Ser-216–Pro-258, and His-389–Asn-481. Composition is skewed to low complexity over residues Arg-149–Pro-176 and Asn-220–Asn-247. A compositionally biased stretch (polar residues) spans Leu-248–Thr-257. Low complexity predominate over residues Ser-436–Ser-478.

It belongs to the bZIP family.

The protein localises to the nucleus. Its function is as follows. Probable transcriptional regulator. This Dictyostelium discoideum (Social amoeba) protein is Probable basic-leucine zipper transcription factor L (bzpL).